The chain runs to 273 residues: Cbp/p300-interacting transactivator 2 (273 aa).

Residues aspartate 137–methionine 204 form a disordered region. Residues serine 165–glycine 200 are compositionally biased toward gly residues.

The protein belongs to the CITED family. Interacts (via C-terminus) with SMAD2. Interacts (via C-terminus) with SMAD3 (via MH2 domain). Interacts with LHX2 (via LIM domains). Interacts with WT1. Interacts (via C-terminus) with EP300 (via CH1 domain); the interaction is stimulated in response to hypoxia. Interacts with PPARA. Interacts (via C-terminus) with TFAP2A, TFAP2B and TFAP2C.

Its subcellular location is the nucleus. Transcriptional coactivator of the p300/CBP-mediated transcription complex. Acts as a bridge, linking TFAP2 transcription factors and the p300/CBP transcriptional coactivator complex in order to stimulate TFAP2-mediated transcriptional activation. Positively regulates TGF-beta signaling through its association with the SMAD/p300/CBP-mediated transcriptional coactivator complex. Stimulates the peroxisome proliferator-activated receptors PPARA transcriptional activity. Enhances estrogen-dependent transactivation mediated by estrogen receptors. Also acts as a transcriptional corepressor; interferes with the binding of the transcription factors HIF1A or STAT2 and the p300/CBP transcriptional coactivator complex. Participates in sex determination and early gonad development by stimulating transcription activation of SRY. Plays a role in controlling left-right patterning during embryogenesis; potentiates transcriptional activation of NODAL-mediated gene transcription in the left lateral plate mesoderm (LPM). Plays an essential role in differentiation of the adrenal cortex from the adrenogonadal primordium (AGP); stimulates WT1-mediated transcription activation thereby up-regulating the nuclear hormone receptor NR5A1 promoter activity. Associates with chromatin to the PITX2 P1 promoter region. The chain is Cbp/p300-interacting transactivator 2 (CITED2) from Saguinus labiatus (Red-chested mustached tamarin).